The following is a 336-amino-acid chain: Ribose-phosphate pyrophosphokinase (336 aa).

Residues 43–45 and 102–103 contribute to the ATP site; these read DQE and RQ. Residues H136 and D178 each coordinate Mg(2+). K201 is a catalytic residue. D-ribose 5-phosphate-binding positions include R203, D227, and 231–235; that span reads DTAGT.

This sequence belongs to the ribose-phosphate pyrophosphokinase family. Class I subfamily. As to quaternary structure, homohexamer. The cofactor is Mg(2+).

The protein localises to the cytoplasm. The enzyme catalyses D-ribose 5-phosphate + ATP = 5-phospho-alpha-D-ribose 1-diphosphate + AMP + H(+). It functions in the pathway metabolic intermediate biosynthesis; 5-phospho-alpha-D-ribose 1-diphosphate biosynthesis; 5-phospho-alpha-D-ribose 1-diphosphate from D-ribose 5-phosphate (route I): step 1/1. Its function is as follows. Involved in the biosynthesis of the central metabolite phospho-alpha-D-ribosyl-1-pyrophosphate (PRPP) via the transfer of pyrophosphoryl group from ATP to 1-hydroxyl of ribose-5-phosphate (Rib-5-P). The sequence is that of Ribose-phosphate pyrophosphokinase from Cereibacter sphaeroides (strain KD131 / KCTC 12085) (Rhodobacter sphaeroides).